The chain runs to 425 residues: D-amino acid dehydrogenase 2 (425 aa).

3–17 (ITVVGAGIVGISTAY) is an FAD binding site.

Belongs to the DadA oxidoreductase family. FAD serves as cofactor.

It catalyses the reaction a D-alpha-amino acid + A + H2O = a 2-oxocarboxylate + AH2 + NH4(+). In terms of biological role, oxidative deamination of D-amino acids. The sequence is that of D-amino acid dehydrogenase 2 (dadA2) from Ralstonia nicotianae (strain ATCC BAA-1114 / GMI1000) (Ralstonia solanacearum).